We begin with the raw amino-acid sequence, 437 residues long: MNAYQNKNITIIGLGKTGLSCVDYLLSQQANIRVIDTRKNPTGIDKLPQNIPLHTGSLNQEWLLESDMIVISPGLAVKTPEIQTALKAGVEVIGDIELFCRAATKPIVGITGSNGKSTVTTLVYEMAKAAGVKVGMGGNIGIPALSLLNEDCELYVLELSSFQLETTYSLKAAAVTVLNVTEDHMDRYMDLEDYRQAKLRIHHNAKVGVLNNEDRLTFGENENQAKHTVSFAENSADYWLKTENGKQYLMVKDEVILPCEEATLVGRHNYMNILAATALAQAIGINLDSIRTALRHFKGLDHRFQLVHQANGIRWINDSKATNVGSTVAALAGLYIEGKLHLLLGGDGKGADFSELAELINQPHIICYCFGRDGAQLAKFSSQSYLFETMEQAIEFLRPTLQSGDMVLLSPACASLDQFASFEKRGEEFTHLAQYSV.

Position 112–118 (112–118 (GSNGKST)) interacts with ATP.

The protein belongs to the MurCDEF family.

Its subcellular location is the cytoplasm. It carries out the reaction UDP-N-acetyl-alpha-D-muramoyl-L-alanine + D-glutamate + ATP = UDP-N-acetyl-alpha-D-muramoyl-L-alanyl-D-glutamate + ADP + phosphate + H(+). It participates in cell wall biogenesis; peptidoglycan biosynthesis. In terms of biological role, cell wall formation. Catalyzes the addition of glutamate to the nucleotide precursor UDP-N-acetylmuramoyl-L-alanine (UMA). This is UDP-N-acetylmuramoylalanine--D-glutamate ligase from Haemophilus influenzae (strain PittGG).